The following is a 588-amino-acid chain: Probable metalloprotease ARX1 (588 aa).

The protein belongs to the peptidase M24 family. As to quaternary structure, component of the nucleoplasmic and cytoplasmic pre-60S ribosomal particles.

Its subcellular location is the cytoplasm. The protein resides in the nucleus. Its function is as follows. Probable metalloprotease involved in proper assembly of pre-ribosomal particles during the biogenesis of the 60S ribosomal subunit. Accompanies the pre-60S particles to the cytoplasm. This chain is Probable metalloprotease ARX1 (ARX1), found in Candida glabrata (strain ATCC 2001 / BCRC 20586 / JCM 3761 / NBRC 0622 / NRRL Y-65 / CBS 138) (Yeast).